The primary structure comprises 167 residues: Ureidoglycolate lyase (167 aa).

The protein belongs to the ureidoglycolate lyase family. In terms of assembly, homodimer. It depends on Ni(2+) as a cofactor.

The enzyme catalyses (S)-ureidoglycolate = urea + glyoxylate. Its pathway is nitrogen metabolism; (S)-allantoin degradation. Catalyzes the catabolism of the allantoin degradation intermediate (S)-ureidoglycolate, generating urea and glyoxylate. Involved in the utilization of allantoin as nitrogen source. This Pseudomonas fluorescens (strain ATCC BAA-477 / NRRL B-23932 / Pf-5) protein is Ureidoglycolate lyase.